Consider the following 148-residue polypeptide: Deoxyuridine 5'-triphosphate nucleotidohydrolase (148 aa).

Substrate-binding positions include 65–67 (RSG), asparagine 78, 82–84 (TID), and lysine 92.

It belongs to the dUTPase family. The cofactor is Mg(2+).

It catalyses the reaction dUTP + H2O = dUMP + diphosphate + H(+). It participates in pyrimidine metabolism; dUMP biosynthesis; dUMP from dCTP (dUTP route): step 2/2. This enzyme is involved in nucleotide metabolism: it produces dUMP, the immediate precursor of thymidine nucleotides and it decreases the intracellular concentration of dUTP so that uracil cannot be incorporated into DNA. This chain is Deoxyuridine 5'-triphosphate nucleotidohydrolase, found in Chlorobium phaeovibrioides (strain DSM 265 / 1930) (Prosthecochloris vibrioformis (strain DSM 265)).